We begin with the raw amino-acid sequence, 200 residues long: Recombination protein RecR (200 aa).

Residues 58–75 form a C4-type zinc finger; the sequence is CPLCFTLKESKEADCHFC. Positions 82–177 constitute a Toprim domain; sequence QSLCIVASPK…NISRLALGLP (96 aa).

Belongs to the RecR family.

Functionally, may play a role in DNA repair. It seems to be involved in an RecBC-independent recombinational process of DNA repair. It may act with RecF and RecO. The sequence is that of Recombination protein RecR from Chlamydia pneumoniae (Chlamydophila pneumoniae).